The following is a 402-amino-acid chain: Multidrug resistance protein MdtH (402 aa).

The next 11 membrane-spanning stretches (helical) occupy residues 13–33 (YFLLVDNMLVVLGFFVVFPLI), 34–54 (SIRFVDQMGWAALMVGIALGL), 99–116 (PWLLWFSCFLSGLGGTLF), 139–159 (LLMMQDSAGAVIGALLGSWLL), 165–185 (LVCATGAALFILCAAFNAWLL), 214–234 (VLTLTGYYMLAVQVMLMLPIM), 243–263 (AAVKWMYAIEACLSLTLLYPI), 277–297 (LMAGLLVMTLSMMPIGLVSSV), 300–320 (LFVLICTFYIGSIIAEPARET), 340–360 (LGLALGGALGYAGGGWLFDSG), and 368–388 (LPWVMLGVVGFITLIALWWQF).

This sequence belongs to the major facilitator superfamily. DHA1 family. MdtH (TC 2.A.1.2.21) subfamily.

It is found in the cell inner membrane. The sequence is that of Multidrug resistance protein MdtH from Enterobacter sp. (strain 638).